Here is a 258-residue protein sequence, read N- to C-terminus: Tryptophan synthase alpha chain (258 aa).

Residues Glu-47 and Asp-58 each act as proton acceptor in the active site.

The protein belongs to the TrpA family. In terms of assembly, tetramer of two alpha and two beta chains.

The catalysed reaction is (1S,2R)-1-C-(indol-3-yl)glycerol 3-phosphate + L-serine = D-glyceraldehyde 3-phosphate + L-tryptophan + H2O. It functions in the pathway amino-acid biosynthesis; L-tryptophan biosynthesis; L-tryptophan from chorismate: step 5/5. Functionally, the alpha subunit is responsible for the aldol cleavage of indoleglycerol phosphate to indole and glyceraldehyde 3-phosphate. The protein is Tryptophan synthase alpha chain of Bacillus cereus (strain ATCC 14579 / DSM 31 / CCUG 7414 / JCM 2152 / NBRC 15305 / NCIMB 9373 / NCTC 2599 / NRRL B-3711).